We begin with the raw amino-acid sequence, 209 residues long: Uracil phosphoribosyltransferase (209 aa).

Residues Arg-79, Arg-104, and 131–139 each bind 5-phospho-alpha-D-ribose 1-diphosphate; that span reads DPMLATGGS. Residues Ile-194 and 199–201 each bind uracil; that span reads GDA. Asp-200 provides a ligand contact to 5-phospho-alpha-D-ribose 1-diphosphate.

The protein belongs to the UPRTase family. Mg(2+) is required as a cofactor.

It catalyses the reaction UMP + diphosphate = 5-phospho-alpha-D-ribose 1-diphosphate + uracil. It functions in the pathway pyrimidine metabolism; UMP biosynthesis via salvage pathway; UMP from uracil: step 1/1. Its activity is regulated as follows. Allosterically activated by GTP. In terms of biological role, catalyzes the conversion of uracil and 5-phospho-alpha-D-ribose 1-diphosphate (PRPP) to UMP and diphosphate. The polypeptide is Uracil phosphoribosyltransferase (Streptococcus pneumoniae (strain ATCC BAA-255 / R6)).